The following is a 222-amino-acid chain: UPF0758 protein YE0063 (222 aa).

The MPN domain maps to 100–222 (VLQNPEITQK…CVSFAERGWL (123 aa)). Positions 171, 173, and 184 each coordinate Zn(2+). Positions 171–184 (HNHPSGKAEPSQAD) match the JAMM motif motif.

It belongs to the UPF0758 family. YicR subfamily.

The protein is UPF0758 protein YE0063 of Yersinia enterocolitica serotype O:8 / biotype 1B (strain NCTC 13174 / 8081).